Consider the following 388-residue polypeptide: Probable proton-coupled zinc antiporter SLC30A3 (388 aa).

A compositionally biased stretch (polar residues) spans 1–13; that stretch reads MEPSPTTGGSETT. Disordered regions lie at residues 1–30 and 35–54; these read MEPS…GLRL and TEAP…SFHH. Residues 1–75 are Cytoplasmic-facing; that stretch reads MEPSPTTGGS…TPERMQAQRQ (75 aa). A helical transmembrane segment spans residues 76-96; the sequence is LCTACAVCCVFMAGEVVGGYL. The Lumenal portion of the chain corresponds to 97 to 105; that stretch reads AHSLAIMTD. Residues 106–126 traverse the membrane as a helical segment; the sequence is AAHLLADVGSMMGSLFSLWLS. Residues His-108 and Asp-112 each coordinate Zn(2+). Over 127 to 145 the chain is Cytoplasmic; it reads TRPATRTMTFGWHRSETLG. Residues 146–166 traverse the membrane as a helical segment; it reads ALASVVSLWMVTGILLYLAFI. The Lumenal segment spans residues 167–177; that stretch reads RLLHSDYHIEG. Residues 178 to 198 form a helical membrane-spanning segment; that stretch reads GAMLLTASIAVCANLLMAFVL. Residues 199 to 235 lie on the Cytoplasmic side of the membrane; it reads HQAGPPHSHGSRGAEYAPLEEGSGEPLPLGNTSVRAA. Residues 236-256 traverse the membrane as a helical segment; the sequence is FVHVLGDLLQSLGVLIASILI. Zn(2+) contacts are provided by His-238 and Asp-242. At 257 to 264 the chain is on the lumenal side; the sequence is YFKPQYKA. A helical transmembrane segment spans residues 265–285; the sequence is ADPISTFLFSICALGSTAPTL. At 286–388 the chain is on the cytoplasmic side; sequence RDVLRVLMEG…CLRCQEPPQA (103 aa).

This sequence belongs to the cation diffusion facilitator (CDF) transporter (TC 2.A.4) family. SLC30A subfamily. In terms of assembly, homodimer. Homodimerization could regulate efficiency of zinc transport. Interacts with TMEM163.

The protein resides in the cytoplasmic vesicle. It localises to the secretory vesicle. The protein localises to the synaptic vesicle membrane. It is found in the synapse. Its subcellular location is the synaptosome. The protein resides in the late endosome membrane. It localises to the lysosome membrane. The enzyme catalyses Zn(2+)(in) + 2 H(+)(out) = Zn(2+)(out) + 2 H(+)(in). Its function is as follows. Probable proton-coupled zinc ion antiporter mediating the import of zinc from cytoplasm into synaptic vesicles and participating to cellular zinc ion homeostasis in the brain. The polypeptide is Probable proton-coupled zinc antiporter SLC30A3 (Bos taurus (Bovine)).